The following is a 133-amino-acid chain: Small ribosomal subunit protein uS19 (133 aa).

This sequence belongs to the universal ribosomal protein uS19 family.

In terms of biological role, protein S19 forms a complex with S13 that binds strongly to the 16S ribosomal RNA. The protein is Small ribosomal subunit protein uS19 of Thermococcus onnurineus (strain NA1).